The chain runs to 490 residues: Betaine aldehyde dehydrogenase (490 aa).

The K(+) site is built by T26 and D93. Position 150–152 (150–152) interacts with NAD(+); that stretch reads GAW. The active-site Charge relay system is the K162. 176–179 provides a ligand contact to NAD(+); the sequence is KPSE. V180 lines the K(+) pocket. NAD(+) is bound at residue 230 to 233; the sequence is GVAT. L246 is a binding site for K(+). Residue E252 is the Proton acceptor of the active site. NAD(+)-binding residues include G254, C286, and E387. Residue C286 is the Nucleophile of the active site. Cysteine sulfenic acid (-SOH) is present on C286. K457 and G460 together coordinate K(+). E464 serves as the catalytic Charge relay system.

This sequence belongs to the aldehyde dehydrogenase family. As to quaternary structure, dimer of dimers. It depends on K(+) as a cofactor.

It catalyses the reaction betaine aldehyde + NAD(+) + H2O = glycine betaine + NADH + 2 H(+). Its pathway is amine and polyamine biosynthesis; betaine biosynthesis via choline pathway; betaine from betaine aldehyde: step 1/1. Involved in the biosynthesis of the osmoprotectant glycine betaine. Catalyzes the irreversible oxidation of betaine aldehyde to the corresponding acid. The sequence is that of Betaine aldehyde dehydrogenase from Stenotrophomonas maltophilia (strain K279a).